A 453-amino-acid polypeptide reads, in one-letter code: Nuclear distribution protein PAC1-2 (453 aa).

Positions 9 to 41 (QADELHKSIVAYLTANNLSTTAATLREELSLGE) constitute a LisH domain. The stretch at 63 to 87 (VVRLQKKVMDLESRSVALQSELEHS) forms a coiled coil. Residues 84-108 (LEHSTPASLSKRKDPTSWLPRSPPR) form a disordered region. 7 WD repeats span residues 113–154 (SHQA…RTLK), 156–196 (HTRA…KNTR), 200–243 (GHDH…CIKT), 246–285 (GHTG…PESK), 290–350 (GHEN…IKTL), 352–391 (GHDN…RCVK), and 396–448 (AHGQ…DKVV).

The protein belongs to the WD repeat LIS1/nudF family. In terms of assembly, self-associates. Interacts with NDL1 and dynein.

Its subcellular location is the cytoplasm. It localises to the cytoskeleton. The protein resides in the spindle pole. Its function is as follows. Positively regulates the activity of the minus-end directed microtubule motor protein dynein. May enhance dynein-mediated microtubule sliding by targeting dynein to the microtubule plus end. Required for nuclear migration during vegetative growth as well as development. Required for retrograde early endosome (EE) transport from the hyphal tip. Required for localization of dynein to the mitotic spindle poles. Recruits additional proteins to the dynein complex at SPBs. The polypeptide is Nuclear distribution protein PAC1-2 (Chaetomium globosum (strain ATCC 6205 / CBS 148.51 / DSM 1962 / NBRC 6347 / NRRL 1970) (Soil fungus)).